We begin with the raw amino-acid sequence, 371 residues long: Protein disulfide isomerase-like 2-2 (371 aa).

The signal sequence occupies residues 1–27; it reads MAIPRISPRKTLPLFAALALALAWAFA. Thioredoxin domains are found at residues 28-143 and 147-262; these read APAF…TEGG and KLAT…EKCG. Active-site nucleophile residues include cysteine 64, cysteine 67, cysteine 183, and cysteine 186. 2 cysteine pairs are disulfide-bonded: cysteine 64–cysteine 67 and cysteine 183–cysteine 186.

Belongs to the protein disulfide isomerase family.

The protein localises to the secreted. The catalysed reaction is Catalyzes the rearrangement of -S-S- bonds in proteins.. Functionally, acts as a protein-folding catalyst that interacts with nascent polypeptides to catalyze the formation, isomerization, and reduction or oxidation of disulfide bonds. May play a role in storage protein biogenesis. This chain is Protein disulfide isomerase-like 2-2 (PDIL2-2), found in Oryza sativa subsp. japonica (Rice).